Reading from the N-terminus, the 728-residue chain is Phosphoribosylformylglycinamidine synthase subunit PurL (728 aa).

The active site involves H42. Positions 45 and 84 each coordinate ATP. Residue E86 participates in Mg(2+) binding. Residues 87-90 and R109 each bind substrate; that span reads SHNH. The active-site Proton acceptor is the H88. D110 lines the Mg(2+) pocket. Q237 lines the substrate pocket. D265 lines the Mg(2+) pocket. 309–311 serves as a coordination point for substrate; that stretch reads ESQ. ATP-binding residues include D491 and G528. Position 529 (N529) interacts with Mg(2+). Position 531 (S531) interacts with substrate.

The protein belongs to the FGAMS family. As to quaternary structure, monomer. Part of the FGAM synthase complex composed of 1 PurL, 1 PurQ and 2 PurS subunits.

The protein resides in the cytoplasm. It carries out the reaction N(2)-formyl-N(1)-(5-phospho-beta-D-ribosyl)glycinamide + L-glutamine + ATP + H2O = 2-formamido-N(1)-(5-O-phospho-beta-D-ribosyl)acetamidine + L-glutamate + ADP + phosphate + H(+). It functions in the pathway purine metabolism; IMP biosynthesis via de novo pathway; 5-amino-1-(5-phospho-D-ribosyl)imidazole from N(2)-formyl-N(1)-(5-phospho-D-ribosyl)glycinamide: step 1/2. Part of the phosphoribosylformylglycinamidine synthase complex involved in the purines biosynthetic pathway. Catalyzes the ATP-dependent conversion of formylglycinamide ribonucleotide (FGAR) and glutamine to yield formylglycinamidine ribonucleotide (FGAM) and glutamate. The FGAM synthase complex is composed of three subunits. PurQ produces an ammonia molecule by converting glutamine to glutamate. PurL transfers the ammonia molecule to FGAR to form FGAM in an ATP-dependent manner. PurS interacts with PurQ and PurL and is thought to assist in the transfer of the ammonia molecule from PurQ to PurL. The sequence is that of Phosphoribosylformylglycinamidine synthase subunit PurL from Campylobacter jejuni (strain RM1221).